The primary structure comprises 446 residues: D(1A) dopamine receptor (446 aa).

The Extracellular segment spans residues 1–23 (MRTLNTSTMEGTGLVAERDFSFR). Asn-5 is a glycosylation site (N-linked (GlcNAc...) asparagine). Residues 24 to 49 (ILTACFLSLLILSTLLGNTLVCAAVI) traverse the membrane as a helical segment. Over 50–60 (RFRHLRSKVTN) the chain is Cytoplasmic. A helical membrane pass occupies residues 61–87 (FFVISLAVSDLLVAVLVMPWKAVAEIA). Residues 88–96 (GFWPFGSFC) lie on the Extracellular side of the membrane. A disulfide bridge links Cys-96 with Cys-186. A helical membrane pass occupies residues 97-119 (NIWVAFDIMCSTASILNLCVISV). Residues 120–138 (DRYWAISSPFRYERKMTPK) are Cytoplasmic-facing. The helical transmembrane segment at 139-163 (AAFILISVAWTLSVLISFIPVQLSW) threads the bilayer. Residues 164-192 (HKAKPTGPSEGNATSLGKTINNCDSSLSR) are Extracellular-facing. Asn-175 carries N-linked (GlcNAc...) asparagine glycosylation. A helical membrane pass occupies residues 193–218 (TYAISSSLISFYIPVAIMIVTYTRIY). Topologically, residues 219-272 (RIAQKQIRRISALERAAVHAKNCQTTTGNGNPMECSQPESSFKMSFKRETKVLK) are cytoplasmic. Residues 273-299 (TLSVIMGVFVCCWLPFFILNCMVPFCG) form a helical membrane-spanning segment. Topologically, residues 300 to 312 (SGETKPFCIDSIT) are extracellular. The chain crosses the membrane as a helical span at residues 313 to 337 (FDVFVWFGWANSSLNPIIYAFNADF). Over 338–446 (RKAFSTLLGC…PITQNGQHPT (109 aa)) the chain is Cytoplasmic. 2 S-palmitoyl cysteine lipidation sites follow: Cys-347 and Cys-351.

It belongs to the G-protein coupled receptor 1 family. As to quaternary structure, interacts with DNAJC14 via its C-terminus. Interacts with DRD2. Interacts with DORIP1.

The protein resides in the cell membrane. It is found in the endoplasmic reticulum membrane. The protein localises to the cell projection. Its subcellular location is the cilium membrane. It localises to the dendrite. The protein resides in the dendritic spine. Functionally, dopamine receptor whose activity is mediated by G proteins which activate adenylyl cyclase. The sequence is that of D(1A) dopamine receptor (DRD1) from Bos taurus (Bovine).